Reading from the N-terminus, the 178-residue chain is Acireductone dioxygenase (178 aa).

Fe(2+) is bound by residues His-100, His-102, Glu-106, and His-145. Ni(2+) is bound by residues His-100, His-102, Glu-106, and His-145.

Belongs to the acireductone dioxygenase (ARD) family. As to quaternary structure, monomer. Requires Fe(2+) as cofactor. Ni(2+) serves as cofactor.

It catalyses the reaction 1,2-dihydroxy-5-(methylsulfanyl)pent-1-en-3-one + O2 = 3-(methylsulfanyl)propanoate + CO + formate + 2 H(+). It carries out the reaction 1,2-dihydroxy-5-(methylsulfanyl)pent-1-en-3-one + O2 = 4-methylsulfanyl-2-oxobutanoate + formate + 2 H(+). It participates in amino-acid biosynthesis; L-methionine biosynthesis via salvage pathway; L-methionine from S-methyl-5-thio-alpha-D-ribose 1-phosphate: step 5/6. Its function is as follows. Catalyzes 2 different reactions between oxygen and the acireductone 1,2-dihydroxy-3-keto-5-methylthiopentene (DHK-MTPene) depending upon the metal bound in the active site. Fe-containing acireductone dioxygenase (Fe-ARD) produces formate and 2-keto-4-methylthiobutyrate (KMTB), the alpha-ketoacid precursor of methionine in the methionine recycle pathway. Ni-containing acireductone dioxygenase (Ni-ARD) produces methylthiopropionate, carbon monoxide and formate, and does not lie on the methionine recycle pathway. This Bacillus velezensis (strain DSM 23117 / BGSC 10A6 / LMG 26770 / FZB42) (Bacillus amyloliquefaciens subsp. plantarum) protein is Acireductone dioxygenase.